Here is a 188-residue protein sequence, read N- to C-terminus: MKIGVLGVQGDVREHVEALHKLGVETLIVKLPEHLDMVDGLILPGGESTTMIRILKEMNMDEKLVEKINDGLPVFATCAGVILLAKRINNYKQEKLGVLDVTVERNAYGRQVESFETFIEIPAIGKDPFRAIFIRAPRIVETGRSVEILAYHEGDPVLVKEGKILASTFHPELTDDLRLHRYFLEMVK.

46 to 48 is an L-glutamine binding site; sequence GES. C78 (nucleophile) is an active-site residue. Residues R105 and 134-135 each bind L-glutamine; that span reads IR. Active-site charge relay system residues include H170 and E172.

The protein belongs to the glutaminase PdxT/SNO family. In terms of assembly, in the presence of PdxS, forms a dodecamer of heterodimers. Only shows activity in the heterodimer.

It catalyses the reaction aldehydo-D-ribose 5-phosphate + D-glyceraldehyde 3-phosphate + L-glutamine = pyridoxal 5'-phosphate + L-glutamate + phosphate + 3 H2O + H(+). It carries out the reaction L-glutamine + H2O = L-glutamate + NH4(+). The protein operates within cofactor biosynthesis; pyridoxal 5'-phosphate biosynthesis. Functionally, catalyzes the hydrolysis of glutamine to glutamate and ammonia as part of the biosynthesis of pyridoxal 5'-phosphate. The resulting ammonia molecule is channeled to the active site of PdxS. The protein is Pyridoxal 5'-phosphate synthase subunit PdxT of Thermotoga neapolitana (strain ATCC 49049 / DSM 4359 / NBRC 107923 / NS-E).